Reading from the N-terminus, the 309-residue chain is Histone-lysine N-methyltransferase SETMAR (309 aa).

Residues 74–137 (PGCACIETPC…RCRNRVVQNG (64 aa)) form the Pre-SET domain. Zn(2+) contacts are provided by cysteine 76, cysteine 78, cysteine 83, cysteine 88, cysteine 90, cysteine 119, cysteine 123, cysteine 125, and cysteine 129. The SET domain maps to 140-264 (FLLQVFQTEK…PGEELSYDYS (125 aa)). S-adenosyl-L-methionine contacts are provided by residues 150–152 (KGW), tyrosine 193, arginine 221, and 224–225 (NH). Cysteine 227, cysteine 288, cysteine 290, and cysteine 295 together coordinate Zn(2+). A Post-SET domain is found at 284–300 (PRKPCYCGAQSCTTFLP).

It belongs to the class V-like SAM-binding methyltransferase superfamily.

It localises to the nucleus. Its subcellular location is the chromosome. It catalyses the reaction L-lysyl(36)-[histone H3] + 2 S-adenosyl-L-methionine = N(6),N(6)-dimethyl-L-lysyl(36)-[histone H3] + 2 S-adenosyl-L-homocysteine + 2 H(+). Its function is as follows. Histone methyltransferase that methylates 'Lys-4' and 'Lys-36' of histone H3, 2 specific tags for epigenetic transcriptional activation. Specifically mediates dimethylation of H3 'Lys-36'. In Mus musculus (Mouse), this protein is Histone-lysine N-methyltransferase SETMAR.